Here is a 344-residue protein sequence, read N- to C-terminus: MQEELKRLEKEAVEKVEAAGSLKEVNDVRVAYLGKKGPITEVLRGMGKLSAEERPKMGALANEVREKIAAAIAEKNARLEEEEVKRKLKEQTIDVTLPGSPVKTGARHPLTIVIEEIEDLFISMGYSVEEGPEVETDYYNFEALNLPKEHPARDMQDSFYITEDTLMRTQTSPVQTRTMEKHKGKGPVKIICPGKVYRRDNDDATHSHQFMQIEGLCVDRDISMSDLKGTLETVAKKMFGEEREIRLRPSFFPFTEPSVEVDVSCFKCGGKGCSVCKQTGWIEILGAGMVHPNVLEMAGFDSKQYQGFAFGMGVERIAMLKYGIDDIRHFYTNDVRFLSQFKQA.

Residue E256 coordinates Mg(2+).

The protein belongs to the class-II aminoacyl-tRNA synthetase family. Phe-tRNA synthetase alpha subunit type 1 subfamily. In terms of assembly, tetramer of two alpha and two beta subunits. Requires Mg(2+) as cofactor.

The protein localises to the cytoplasm. The enzyme catalyses tRNA(Phe) + L-phenylalanine + ATP = L-phenylalanyl-tRNA(Phe) + AMP + diphosphate + H(+). The protein is Phenylalanine--tRNA ligase alpha subunit of Bacillus licheniformis (strain ATCC 14580 / DSM 13 / JCM 2505 / CCUG 7422 / NBRC 12200 / NCIMB 9375 / NCTC 10341 / NRRL NRS-1264 / Gibson 46).